We begin with the raw amino-acid sequence, 376 residues long: Deoxyguanosinetriphosphate triphosphohydrolase-like protein (376 aa).

An HD domain is found at 62–198 (RLTHSLEVSA…AALADDISYI (137 aa)).

The protein belongs to the dGTPase family. Type 2 subfamily.

The polypeptide is Deoxyguanosinetriphosphate triphosphohydrolase-like protein (Rickettsia canadensis (strain McKiel)).